The sequence spans 336 residues: COP9 signalosome complex subunit 5 (336 aa).

Positions 44 to 181 constitute an MPN domain; sequence VRISSVAMIK…IGAFRTIPEG (138 aa). 3 residues coordinate Zn(2+): His127, His129, and Asp140. Residues 127-140 carry the JAMM motif motif; it reads HSHPGYGCWLSGID.

This sequence belongs to the peptidase M67A family. CSN5 subfamily. In terms of assembly, component of the COP9 signalosome (CSN) complex.

The protein resides in the cytoplasm. The protein localises to the nucleus. Catalytic component of the COP9 signalosome (CSN) complex that acts as an regulator of the ubiquitin (Ubl) conjugation pathway by mediating the deneddylation of the cullin subunit of SCF-type E3 ubiquitin-protein ligase complexes. The CSN complex is involved in the regulation of the circadian clock through its control of the stability of the SCF(FWD-1) complex. This is COP9 signalosome complex subunit 5 (csn-5) from Neurospora crassa (strain ATCC 24698 / 74-OR23-1A / CBS 708.71 / DSM 1257 / FGSC 987).